Reading from the N-terminus, the 293-residue chain is Formamidopyrimidine-DNA glycosylase (293 aa).

Proline 2 (schiff-base intermediate with DNA) is an active-site residue. Glutamate 3 acts as the Proton donor in catalysis. The active-site Proton donor; for beta-elimination activity is the lysine 58. DNA contacts are provided by histidine 104, arginine 127, and arginine 170. Residues 257-293 (SVYGREGKPCRNPACGGTVERVVQSGRSTFFCASCQT) form an FPG-type zinc finger. The active-site Proton donor; for delta-elimination activity is arginine 283.

This sequence belongs to the FPG family. Monomer. The cofactor is Zn(2+).

It catalyses the reaction Hydrolysis of DNA containing ring-opened 7-methylguanine residues, releasing 2,6-diamino-4-hydroxy-5-(N-methyl)formamidopyrimidine.. It carries out the reaction 2'-deoxyribonucleotide-(2'-deoxyribose 5'-phosphate)-2'-deoxyribonucleotide-DNA = a 3'-end 2'-deoxyribonucleotide-(2,3-dehydro-2,3-deoxyribose 5'-phosphate)-DNA + a 5'-end 5'-phospho-2'-deoxyribonucleoside-DNA + H(+). Involved in base excision repair of DNA damaged by oxidation or by mutagenic agents. Acts as a DNA glycosylase that recognizes and removes damaged bases. Has a preference for oxidized purines, such as 7,8-dihydro-8-oxoguanine (8-oxoG). Has AP (apurinic/apyrimidinic) lyase activity and introduces nicks in the DNA strand. Cleaves the DNA backbone by beta-delta elimination to generate a single-strand break at the site of the removed base with both 3'- and 5'-phosphates. The chain is Formamidopyrimidine-DNA glycosylase from Brucella ovis (strain ATCC 25840 / 63/290 / NCTC 10512).